Here is a 533-residue protein sequence, read N- to C-terminus: Acyl-CoA-binding domain-containing protein 5 (533 aa).

The ACB domain maps to 42-131 (HETRFEAAVK…MKKILETMPM (90 aa)). An acyl-CoA contacts are provided by residues 53-62 (IQSLPKNGSF), 73-77 (YSFYK), Lys99, and Tyr118. The segment at 182 to 227 (TPNAKTVNGKAESSDSGAESEEEAAQEDPKRPEPRDSDKKMMKKSA) is disordered. Phosphoserine is present on residues Ser194, Ser195, Ser197, and Ser201. Residues 208 to 227 (EDPKRPEPRDSDKKMMKKSA) are compositionally biased toward basic and acidic residues. Phosphoserine occurs at positions 244 and 314. A disordered region spans residues 339–443 (GGNPSQPLES…ERWGSDRGSR (105 aa)). A compositionally biased stretch (basic and acidic residues) spans 374-383 (GKGEVKRGGE). Position 429 is a phosphoserine (Ser429). Residues 432–442 (DGERWGSDRGS) are compositionally biased toward basic and acidic residues. The stretch at 448–478 (EQIALVLMRLQEDMQNVLQRLHKLEMLAASQ) forms a coiled coil. Lys470 bears the N6-acetyllysine mark. The chain crosses the membrane as a helical span at residues 503-525 (SPGALTFAIIWPFIAQWLVHLYY).

It belongs to the ATG37 family. As to expression, highly expressed in brain and liver. Lower levels of expression in spleen and heart.

The protein resides in the peroxisome membrane. Its function is as follows. Acyl-CoA binding protein which acts as the peroxisome receptor for pexophagy but is dispensable for aggrephagy and nonselective autophagy. Binds medium- and long-chain acyl-CoA esters. In Bos taurus (Bovine), this protein is Acyl-CoA-binding domain-containing protein 5 (ACBD5).